Reading from the N-terminus, the 2395-residue chain is Helicase ssl-1 (2395 aa).

Low complexity predominate over residues 1-12 (MPATPVRASSTR). Positions 1-62 (MPATPVRASS…EKKKKKTSDD (62 aa)) are disordered. An HSA domain is found at 227–300 (LPKCVEPERN…IKEKRKMCAG (74 aa)). Residues 354 to 363 (LVSSSKSPSI) are compositionally biased toward polar residues. Disordered stretches follow at residues 354–404 (LVSS…VRQE) and 444–504 (EKLE…HGVL). Basic and acidic residues-rich tracts occupy residues 365–375 (SDRDDKDEEFK), 394–404 (KSQKKEDVRQE), and 444–462 (EKLE…NEEK). A coiled-coil region spans residues 388-464 (TIANAEKSQK…ACGDNEEKME (77 aa)). Over residues 470-490 (SSDAQKPSTSSSDLTAEQLQD) the composition is skewed to polar residues. A Helicase ATP-binding domain is found at 570–735 (VTLYEKNLNG…WSLMHFLMPT (166 aa)). 583-590 (DEMGLGKT) contributes to the ATP binding site. A disordered region spans residues 963–982 (AQPLQNGNSIPQNAPNRPQT). The region spanning 1196–1342 (LLRQLYLYKH…ELAIDEAGFT (147 aa)) is the Helicase C-terminal domain. Positions 1452–1476 (KPEFEEECKEAEALIDQKREEWDKN) form a coiled coil. Disordered regions lie at residues 1615–1706 (ESAA…EEPD), 1977–2073 (SIQH…RRNA), 2092–2143 (QSGK…PQQR), 2276–2306 (QMRS…RPLV), and 2350–2395 (MQMP…PPQN). Low complexity-rich tracts occupy residues 1647–1669 (QQPT…QQQQ) and 1981–1995 (LQSS…QNLQ). Residues 1996–2019 (NSHNSEQRNNVQNMHQNQYNSSQN) show a composition bias toward polar residues. Low complexity-rich tracts occupy residues 2051–2073 (LVQQ…RRNA) and 2092–2114 (QSGK…SSND). Residues 2115–2129 (GQGGASTVGGGGGGS) show a composition bias toward gly residues. Positions 2130-2142 (QQPHQQQQQQPQQ) are enriched in low complexity. The span at 2281-2299 (NGGGVGGQGGLQGGPGGPQ) shows a compositional bias: gly residues. The span at 2361–2377 (QQQAPPQSSQQASQQAP) shows a compositional bias: low complexity.

This sequence belongs to the SNF2/RAD54 helicase family. SWR1 subfamily.

It is found in the nucleus. Its function is as follows. Probable catalytic component of a chromatin-remodeling complex which mediates the ATP-dependent exchange of histone H2A variant H2AV/htz-1 for H2A, leading to transcriptional regulation of selected genes by chromatin remodeling. Involved in foregut development, and may be involved in vulval development. The sequence is that of Helicase ssl-1 (ssl-1) from Caenorhabditis elegans.